The following is a 314-amino-acid chain: MKKGINRVVLVGTGAVGCSYAYCMINQAVAEEFVLVDVNEAKAEGEAMDLSHAVPFAPAPTRVWKGSYEDCKDADLVVITAGLPQKPGETRLDLVEKNAKIFKQIVRSIMDSGFDGIFLIATNPVDILTYVTWKESGLPKERVIGSGTTLDSARFRYMLGEYFNIGPHNIHAYIIGEHGDTELPVWSHVSVGIQKLQTLLEKDNTYNQEDLDKIFINVRDAAYHIIERKGATYYGIGMSLLRVTKAILNDENSVLTVSAYLEGQYGQKDVYIGVPAVLNRGGVREILEVELSEDEELKFDHSVQVLKETMAPVL.

NAD(+) is bound by residues Val16, Asp37, Lys42, Tyr68, and 82 to 83 (GL). Residues Gln85, Arg91, and 123–126 (NPVD) each bind substrate. NAD(+) is bound by residues 121–123 (ATN) and Ser146. 151–154 (DSAR) is a substrate binding site. Beta-D-fructose 1,6-bisphosphate-binding residues include Arg156 and His171. Residue His178 is the Proton acceptor of the active site. Tyr223 carries the post-translational modification Phosphotyrosine. Thr232 contributes to the substrate binding site.

The protein belongs to the LDH/MDH superfamily. LDH family. Homotetramer.

It localises to the cytoplasm. It catalyses the reaction (S)-lactate + NAD(+) = pyruvate + NADH + H(+). It participates in fermentation; pyruvate fermentation to lactate; (S)-lactate from pyruvate: step 1/1. Its activity is regulated as follows. Allosterically activated by fructose 1,6-bisphosphate (FBP). In terms of biological role, catalyzes the conversion of lactate to pyruvate. The polypeptide is L-lactate dehydrogenase 1 (Bacillus anthracis).